We begin with the raw amino-acid sequence, 217 residues long: DNA repair protein homolog YobH (217 aa).

The UmuC domain maps to 1–68 (MAKAIQSSMW…RPLSKMWGIG (68 aa)).

This sequence belongs to the DNA polymerase type-Y family.

This Bacillus subtilis (strain 168) protein is DNA repair protein homolog YobH (yobH).